A 366-amino-acid polypeptide reads, in one-letter code: Methylthioribose-1-phosphate isomerase (366 aa).

D260 acts as the Proton donor in catalysis.

The protein belongs to the eIF-2B alpha/beta/delta subunits family. MtnA subfamily.

The protein resides in the cytoplasm. It is found in the nucleus. It catalyses the reaction 5-(methylsulfanyl)-alpha-D-ribose 1-phosphate = 5-(methylsulfanyl)-D-ribulose 1-phosphate. It participates in amino-acid biosynthesis; L-methionine biosynthesis via salvage pathway; L-methionine from S-methyl-5-thio-alpha-D-ribose 1-phosphate: step 1/6. Catalyzes the interconversion of methylthioribose-1-phosphate (MTR-1-P) into methylthioribulose-1-phosphate (MTRu-1-P). The protein is Methylthioribose-1-phosphate isomerase of Caenorhabditis elegans.